A 194-amino-acid polypeptide reads, in one-letter code: Protein GrpE (194 aa).

The protein belongs to the GrpE family. As to quaternary structure, homodimer.

The protein localises to the cytoplasm. Participates actively in the response to hyperosmotic and heat shock by preventing the aggregation of stress-denatured proteins, in association with DnaK and GrpE. It is the nucleotide exchange factor for DnaK and may function as a thermosensor. Unfolded proteins bind initially to DnaJ; upon interaction with the DnaJ-bound protein, DnaK hydrolyzes its bound ATP, resulting in the formation of a stable complex. GrpE releases ADP from DnaK; ATP binding to DnaK triggers the release of the substrate protein, thus completing the reaction cycle. Several rounds of ATP-dependent interactions between DnaJ, DnaK and GrpE are required for fully efficient folding. This chain is Protein GrpE, found in Aliivibrio fischeri (strain MJ11) (Vibrio fischeri).